The chain runs to 351 residues: Modulator of apoptosis 1 (351 aa).

An LIR motif is present at residues 49 to 52 (YRLL). Positions 120–127 (LSRALGHE) are BH3-like. The segment at 202-205 (KRRR) is RASSF1-binding.

This sequence belongs to the PNMA family. In terms of assembly, homodimer. Under normal circumstances, held in an inactive conformation by an intramolecular interaction. Interacts with BAX. Binding to RASSF1 isoform A (RASSF1A) relieves this inhibitory interaction and allows further binding to BAX. Also binds to BCL2 and BCLX. Recruited to the TNFRSF1A and TNFRSF10A complexes in response to their respective cognate ligand, after internalization. Interacts with TRIM39. Interacts with RASSF6. Interacts with ATG8 proteins MAP1LC3A, MAP1LC3B and MAP1LC3C. Does not interact with ATG8 proteins GABARAPL1, GABARAPL2 and GABARAP. Interacts with SQSTM1; promoting dissociation of SQSTM1 inclusion bodies that sequester KEAP1. Ubiquitinated and degraded during mitotic exit by APC/C-Cdh1, this modification is inhibited by TRIM39. In terms of tissue distribution, widely expressed, with high levels in heart and brain.

Its subcellular location is the cytoplasm. It is found in the cytosol. It localises to the mitochondrion outer membrane. The protein resides in the extracellular vesicle membrane. Functionally, retrotransposon-derived protein that forms virion-like capsids. Acts as an effector of BAX during apoptosis: enriched at outer mitochondria membrane and associates with BAX upon induction of apoptosis, facilitating BAX-dependent mitochondrial outer membrane permeabilization and apoptosis. Required for death receptor-dependent apoptosis. When associated with RASSF1, promotes BAX conformational change and translocation to mitochondrial membranes in response to TNF and TNFSF10 stimulation. Also promotes autophagy: promotes phagophore closure via association with ATG8 proteins. Acts as an inhibitor of the NFE2L2/NRF2 pathway via interaction with SQSTM1: interaction promotes dissociation of SQSTM1 inclusion bodies that sequester KEAP1, relieving inactivation of the BCR(KEAP1) complex. The chain is Modulator of apoptosis 1 from Homo sapiens (Human).